The chain runs to 378 residues: Queuine tRNA-ribosyltransferase (378 aa).

The Proton acceptor role is filled by D89. Residues 89 to 93 (DSGGF), D143, Q194, and G221 each bind substrate. The tract at residues 252 to 258 (GVGTPAN) is RNA binding. The Nucleophile role is filled by D271. C309, C311, C314, and H340 together coordinate Zn(2+).

It belongs to the queuine tRNA-ribosyltransferase family. In terms of assembly, homodimer. Within each dimer, one monomer is responsible for RNA recognition and catalysis, while the other monomer binds to the replacement base PreQ1. It depends on Zn(2+) as a cofactor.

The enzyme catalyses 7-aminomethyl-7-carbaguanine + guanosine(34) in tRNA = 7-aminomethyl-7-carbaguanosine(34) in tRNA + guanine. Its pathway is tRNA modification; tRNA-queuosine biosynthesis. Catalyzes the base-exchange of a guanine (G) residue with the queuine precursor 7-aminomethyl-7-deazaguanine (PreQ1) at position 34 (anticodon wobble position) in tRNAs with GU(N) anticodons (tRNA-Asp, -Asn, -His and -Tyr). Catalysis occurs through a double-displacement mechanism. The nucleophile active site attacks the C1' of nucleotide 34 to detach the guanine base from the RNA, forming a covalent enzyme-RNA intermediate. The proton acceptor active site deprotonates the incoming PreQ1, allowing a nucleophilic attack on the C1' of the ribose to form the product. After dissociation, two additional enzymatic reactions on the tRNA convert PreQ1 to queuine (Q), resulting in the hypermodified nucleoside queuosine (7-(((4,5-cis-dihydroxy-2-cyclopenten-1-yl)amino)methyl)-7-deazaguanosine). The chain is Queuine tRNA-ribosyltransferase from Lachnospira eligens (strain ATCC 27750 / DSM 3376 / VPI C15-48 / C15-B4) (Eubacterium eligens).